The sequence spans 156 residues: Cellulose synthase operon protein D (156 aa).

The protein operates within glycan metabolism; bacterial cellulose biosynthesis. In terms of biological role, may have a major role in the perfection of crystallization, involved either in the pore structure itself or in the organization of the pores within the linear array of terminal synthesizing complexes (TCs). In Komagataeibacter xylinus (Gluconacetobacter xylinus), this protein is Cellulose synthase operon protein D.